Here is a 196-residue protein sequence, read N- to C-terminus: uncharacterized protein (196 aa).

Residues 122-135 are compositionally biased toward basic and acidic residues; the sequence is SEIEKKQEPIERKT. Residues 122-150 are disordered; the sequence is SEIEKKQEPIERKTSTTTNTESNQEKPLR.

This is an uncharacterized protein from Leptospira interrogans.